We begin with the raw amino-acid sequence, 609 residues long: Protein alan shepard (609 aa).

Pro residues predominate over residues 1–12 (MHPRYSPAPPPL). A disordered region spans residues 1-96 (MHPRYSPAPP…ASVAAAPPTP (96 aa)). Tyr5 bears the Phosphotyrosine mark. Residues 13 to 35 (HQQQQQQPPQQQQQQMGGPHQQQ) show a composition bias toward low complexity. Residues 37–50 (GGVGPGTGHGGVGA) show a composition bias toward gly residues. 2 stretches are compositionally biased toward low complexity: residues 51–68 (AVGA…NSQQ) and 83–92 (SSSAASVAAA). Tyr152 and Tyr168 each carry phosphotyrosine. The tract at residues 190–252 (PATTTYGQRV…AQNQNQQGGE (63 aa)) is disordered. Over residues 204–252 (SPSNTNSSSSSNTGSQSGTLSTSLSNTTNTNTTMGPNGTAQNQNQQGGE) the composition is skewed to low complexity. RRM domains lie at 257–330 (TNLY…MAKQ) and 336–415 (TNLY…FADG). Positions 583–609 (MTDSEQASTAASPDEAYTQYPHQAAPK) are disordered.

Has a role in the perception of gravity. This chain is Protein alan shepard, found in Drosophila grimshawi (Hawaiian fruit fly).